We begin with the raw amino-acid sequence, 313 residues long: Glyoxylate/hydroxypyruvate reductase A (313 aa).

Residue Arg-228 is part of the active site. The active-site Proton donor is His-276.

It belongs to the D-isomer specific 2-hydroxyacid dehydrogenase family. GhrA subfamily.

It localises to the cytoplasm. The catalysed reaction is glycolate + NADP(+) = glyoxylate + NADPH + H(+). It catalyses the reaction (R)-glycerate + NAD(+) = 3-hydroxypyruvate + NADH + H(+). It carries out the reaction (R)-glycerate + NADP(+) = 3-hydroxypyruvate + NADPH + H(+). In terms of biological role, catalyzes the NADPH-dependent reduction of glyoxylate and hydroxypyruvate into glycolate and glycerate, respectively. The chain is Glyoxylate/hydroxypyruvate reductase A from Photorhabdus laumondii subsp. laumondii (strain DSM 15139 / CIP 105565 / TT01) (Photorhabdus luminescens subsp. laumondii).